Here is a 458-residue protein sequence, read N- to C-terminus: Putative U-box domain-containing protein 46 (458 aa).

Residues 71 to 144 (EVPKEFICTL…TQWCLVNKYD (74 aa)) form the U-box domain. ARM repeat units follow at residues 241-281 (ESNK…SLSA) and 283-322 (DSNK…NLCI).

It carries out the reaction S-ubiquitinyl-[E2 ubiquitin-conjugating enzyme]-L-cysteine + [acceptor protein]-L-lysine = [E2 ubiquitin-conjugating enzyme]-L-cysteine + N(6)-ubiquitinyl-[acceptor protein]-L-lysine.. Its pathway is protein modification; protein ubiquitination. Functionally, functions as an E3 ubiquitin ligase. In Arabidopsis thaliana (Mouse-ear cress), this protein is Putative U-box domain-containing protein 46 (PUB46).